Reading from the N-terminus, the 539-residue chain is Phosphoenolpyruvate carboxykinase (ATP) (539 aa).

Substrate contacts are provided by R64, Y206, and K212. Residues K212, H231, and 247 to 255 (GLSGTGKTT) each bind ATP. Mn(2+) contacts are provided by K212 and H231. D268 serves as a coordination point for Mn(2+). Residues E296, R332, 448 to 449 (RI), and T454 each bind ATP. R332 lines the substrate pocket.

Belongs to the phosphoenolpyruvate carboxykinase (ATP) family. In terms of assembly, monomer. Requires Mn(2+) as cofactor.

The protein resides in the cytoplasm. It carries out the reaction oxaloacetate + ATP = phosphoenolpyruvate + ADP + CO2. It functions in the pathway carbohydrate biosynthesis; gluconeogenesis. Functionally, involved in the gluconeogenesis. Catalyzes the conversion of oxaloacetate (OAA) to phosphoenolpyruvate (PEP) through direct phosphoryl transfer between the nucleoside triphosphate and OAA. The sequence is that of Phosphoenolpyruvate carboxykinase (ATP) from Salmonella arizonae (strain ATCC BAA-731 / CDC346-86 / RSK2980).